Consider the following 432-residue polypeptide: MACKFRLLLENAEQIVVVCSKEEEYLLEDGMQHLAILEKASLVIGNDGFIKDVGPAETIRNQFSNASFENIIDCSGKCVLPGFVDAHTHPVWAGDRVHEFAMKLAGATYMDIHKAGGGINYTVEHTTTASEEELFCSFKHRLERMLRAGTTLVECKSGYGLKLETELKMLRVIERAHQELDIAVSSTYCGAHSVPKGKSAQEATDDIIANHLPALKQMALNGEIHVDNIDVFCEKGVFDLDSTRKILQAGKAIGLNLNFHGDELNPMNSAELGAELGAHAVSHLEEVSDKGIAALAKAKCSAVLLPTTAYILRLKQPRARDMLKAGVIVSLGSDFNPNAYCFSMPMVMHLACVNMKMSLKEALAAATINAAYALGRAHTHGSLEVGKQGDVVVINASRWEHVIYQFGGHQELIEYVVIKGKIVYKNENVLCL.

4-imidazolone-5-propanoate contacts are provided by tyrosine 159 and histidine 192. N-formimidoyl-L-glutamate is bound at residue tyrosine 159. A Fe(3+)-binding site is contributed by histidine 260. Histidine 260 provides a ligand contact to Zn(2+). Glutamate 263 serves as a coordination point for 4-imidazolone-5-propanoate. Aspartate 334 contributes to the Fe(3+) binding site. Zn(2+) is bound at residue aspartate 334. Asparagine 336 lines the N-formimidoyl-L-glutamate pocket.

It belongs to the metallo-dependent hydrolases superfamily. HutI family. Zn(2+) serves as cofactor. Fe(3+) is required as a cofactor.

The catalysed reaction is 4-imidazolone-5-propanoate + H2O = N-formimidoyl-L-glutamate. Its pathway is amino-acid degradation; L-histidine degradation into L-glutamate; N-formimidoyl-L-glutamate from L-histidine: step 3/3. The sequence is that of Probable imidazolonepropionase (amdhd1) from Xenopus tropicalis (Western clawed frog).